A 124-amino-acid polypeptide reads, in one-letter code: Large ribosomal subunit protein eL33 (124 aa).

Residue alanine 2 is modified to N-acetylalanine.

Belongs to the eukaryotic ribosomal protein eL33 family.

The protein is Large ribosomal subunit protein eL33 of Caenorhabditis elegans.